The following is a 96-amino-acid chain: uncharacterized protein (96 aa).

This is an uncharacterized protein from Saimiriine herpesvirus 2 (strain 11) (SaHV-2).